The following is a 673-amino-acid chain: NADH-quinone oxidoreductase chain 3 (673 aa).

Residues 5–90 (RKIKIDDTII…PSEIRTNSPM (86 aa)) enclose the 2Fe-2S ferredoxin-type domain. C37, C48, C51, and C66 together coordinate [2Fe-2S] cluster. Positions 90–129 (MVKKAREGVMEFLLINHPLDCPICDQGGECDLQDQAMAYG) constitute a 4Fe-4S His(Cys)3-ligated-type domain. [4Fe-4S] cluster contacts are provided by H106, C110, C113, C119, C158, C161, C164, and C208. The region spanning 227-283 (LTKTESIDVMDALGSSIRIDTKGREVMRILPRNHDGVNEEWISDKTRFVWDGLRRQR) is the 4Fe-4S Mo/W bis-MGD-type domain.

This sequence belongs to the complex I 75 kDa subunit family. As to quaternary structure, NDH-1 is composed of at least 14 different subunits, Nqo1 to Nqo14. The complex has a L-shaped structure, with the hydrophobic arm (subunits Nqo7, Nqo8, Nqo10 to Nqo14) embedded in the inner membrane and the hydrophilic peripheral arm (subunits Nqo1 to Nqo6, Nqo9) protruding into the bacterial cytoplasm. The hydrophilic domain contains all the redox centers. The cofactor is [2Fe-2S] cluster. [4Fe-4S] cluster serves as cofactor.

The protein localises to the cell inner membrane. The catalysed reaction is a quinone + NADH + 5 H(+)(in) = a quinol + NAD(+) + 4 H(+)(out). In terms of biological role, NDH-1 shuttles electrons from NADH, via FMN and iron-sulfur (Fe-S) centers, to quinones in the respiratory chain. The immediate electron acceptor for the enzyme in this species is believed to be ubiquinone. Couples the redox reaction to proton translocation (for every two electrons transferred, four hydrogen ions are translocated across the cytoplasmic membrane), and thus conserves the redox energy in a proton gradient. The protein is NADH-quinone oxidoreductase chain 3 of Paracoccus denitrificans.